We begin with the raw amino-acid sequence, 200 residues long: Peptidyl-tRNA hydrolase (200 aa).

TRNA is bound at residue Tyr-23. His-28 serves as the catalytic Proton acceptor. TRNA contacts are provided by Phe-79, Asn-81, and Asn-127.

The protein belongs to the PTH family. Monomer.

It localises to the cytoplasm. It catalyses the reaction an N-acyl-L-alpha-aminoacyl-tRNA + H2O = an N-acyl-L-amino acid + a tRNA + H(+). In terms of biological role, hydrolyzes ribosome-free peptidyl-tRNAs (with 1 or more amino acids incorporated), which drop off the ribosome during protein synthesis, or as a result of ribosome stalling. Functionally, catalyzes the release of premature peptidyl moieties from peptidyl-tRNA molecules trapped in stalled 50S ribosomal subunits, and thus maintains levels of free tRNAs and 50S ribosomes. In Streptomyces coelicolor (strain ATCC BAA-471 / A3(2) / M145), this protein is Peptidyl-tRNA hydrolase.